Reading from the N-terminus, the 154-residue chain is Ascorbate-specific PTS system EIIA component (154 aa).

The region spanning 6–150 (SLAENNSIRL…QEVLDLIDRT (145 aa)) is the PTS EIIA type-2 domain. The Tele-phosphohistidine intermediate role is filled by His68. His68 bears the Phosphohistidine mark.

It is found in the cytoplasm. In terms of biological role, the phosphoenolpyruvate-dependent sugar phosphotransferase system (sugar PTS), a major carbohydrate active transport system, catalyzes the phosphorylation of incoming sugar substrates concomitantly with their translocation across the cell membrane. The enzyme II UlaABC PTS system is involved in ascorbate transport. In Salmonella paratyphi A (strain ATCC 9150 / SARB42), this protein is Ascorbate-specific PTS system EIIA component (ulaC).